The following is a 269-amino-acid chain: Shikimate dehydrogenase (NADP(+)) (269 aa).

Residues Ser-17–Ser-19 and Thr-64 each bind shikimate. Lys-68 functions as the Proton acceptor in the catalytic mechanism. NADP(+) is bound at residue Glu-80. Shikimate contacts are provided by Asn-89 and Asp-105. NADP(+)-binding positions include Gly-130–Ala-134, Asn-154–Lys-159, and Met-213. Residue Tyr-215 coordinates shikimate. Gly-237 contributes to the NADP(+) binding site.

This sequence belongs to the shikimate dehydrogenase family. As to quaternary structure, homodimer.

The catalysed reaction is shikimate + NADP(+) = 3-dehydroshikimate + NADPH + H(+). The protein operates within metabolic intermediate biosynthesis; chorismate biosynthesis; chorismate from D-erythrose 4-phosphate and phosphoenolpyruvate: step 4/7. Its function is as follows. Involved in the biosynthesis of the chorismate, which leads to the biosynthesis of aromatic amino acids. Catalyzes the reversible NADPH linked reduction of 3-dehydroshikimate (DHSA) to yield shikimate (SA). The polypeptide is Shikimate dehydrogenase (NADP(+)) (Neisseria flavescens).